Consider the following 156-residue polypeptide: MLYKNVDEFIKVIDKTKRIMGLDFGEKKIGIALSDRTNLIAIPYSVYVRRSSRKDLGSLYSIFVENDVGSIVIGWPLELSGVENELCQKVVMFANRIITRYKINICLHDERYSTAMATRLAKLANIKRKESQAIDDKISAVLILQQVLDIIKVYQM.

This sequence belongs to the YqgF nuclease family.

The protein localises to the cytoplasm. In terms of biological role, could be a nuclease involved in processing of the 5'-end of pre-16S rRNA. This chain is Putative pre-16S rRNA nuclease, found in Ehrlichia chaffeensis (strain ATCC CRL-10679 / Arkansas).